A 224-amino-acid polypeptide reads, in one-letter code: Biosynthetic peptidoglycan transglycosylase (224 aa).

Residues 12-32 (ILVVLAILPVFLLLVYSLPFV) traverse the membrane as a helical segment.

It belongs to the glycosyltransferase 51 family.

The protein resides in the cell inner membrane. The catalysed reaction is [GlcNAc-(1-&gt;4)-Mur2Ac(oyl-L-Ala-gamma-D-Glu-L-Lys-D-Ala-D-Ala)](n)-di-trans,octa-cis-undecaprenyl diphosphate + beta-D-GlcNAc-(1-&gt;4)-Mur2Ac(oyl-L-Ala-gamma-D-Glu-L-Lys-D-Ala-D-Ala)-di-trans,octa-cis-undecaprenyl diphosphate = [GlcNAc-(1-&gt;4)-Mur2Ac(oyl-L-Ala-gamma-D-Glu-L-Lys-D-Ala-D-Ala)](n+1)-di-trans,octa-cis-undecaprenyl diphosphate + di-trans,octa-cis-undecaprenyl diphosphate + H(+). The protein operates within cell wall biogenesis; peptidoglycan biosynthesis. Functionally, peptidoglycan polymerase that catalyzes glycan chain elongation from lipid-linked precursors. The protein is Biosynthetic peptidoglycan transglycosylase of Brucella melitensis biotype 1 (strain ATCC 23456 / CCUG 17765 / NCTC 10094 / 16M).